The chain runs to 311 residues: Fluoride export protein 1 (311 aa).

Topologically, residues 1–6 are cytoplasmic; the sequence is MLLTQS. The helical transmembrane segment at 7 to 25 threads the bilayer; that stretch reads YFCIMSMLGTLARLGLTAL. Residues 26-29 are Extracellular-facing; it reads NTYP. Residues 30-50 form a helical membrane-spanning segment; sequence GAPFSGLLWVQFVGCVIMGFC. Residues 51–65 lie on the Cytoplasmic side of the membrane; that stretch reads QTESVFFPRPKHNAT. A helical membrane pass occupies residues 66–86; it reads FLLAITTGFCGSLTTFSSWML. The Extracellular portion of the chain corresponds to 87 to 106; sequence QMFTGMANLDPFERRGRGYS. The helical transmembrane segment at 107-127 threads the bilayer; that stretch reads FLSVVSDFMVTMCIAMSSLIW. The Cytoplasmic portion of the chain corresponds to 128-154; the sequence is GKQIGKTTGQWRIGKVAFAWPIPAHTH. A helical membrane pass occupies residues 155 to 175; sequence IVVRVLLLLLSICFFVGAAFY. At 176–186 the chain is on the extracellular side; sequence TAYTTNVTHRG. A glycan (N-linked (GlcNAc...) asparagine) is linked at Asn181. The helical transmembrane segment at 187 to 207 threads the bilayer; it reads IGFSLIFSPFAALTRLYLARF. Topologically, residues 208–212 are cytoplasmic; it reads LNSPQ. A helical membrane pass occupies residues 213–233; it reads YFIPYGTLCANVFATLLLSIM. At 234–250 the chain is on the extracellular side; it reads YMIPQITHCTPVSRSVM. The chain crosses the membrane as a helical span at residues 251–268; it reads YGIQNGFCAVLSTLSTFS. At 269–278 the chain is on the cytoplasmic side; it reads NELHTMPIKR. A helical transmembrane segment spans residues 279 to 299; the sequence is AYIYCIISVAISFSICVIVDG. At 300–311 the chain is on the extracellular side; the sequence is ATAWGHGYTEKY.

The protein belongs to the fluoride channel Fluc/FEX (TC 1.A.43) family.

The protein localises to the cell membrane. The catalysed reaction is fluoride(in) = fluoride(out). Functionally, fluoride channel required for the rapid expulsion of cytoplasmic fluoride. The protein is Fluoride export protein 1 (fex1) of Schizosaccharomyces pombe (strain 972 / ATCC 24843) (Fission yeast).